Consider the following 609-residue polypeptide: Aspartate--tRNA(Asp/Asn) ligase (609 aa).

Position 175 (E175) interacts with L-aspartate. The segment at 199–202 (QQFK) is aspartate. 2 residues coordinate L-aspartate: R221 and H468. 221–223 (RDE) serves as a coordination point for ATP. ATP is bound at residue E502. R509 is an L-aspartate binding site. Residue 554–557 (GIDR) coordinates ATP.

It belongs to the class-II aminoacyl-tRNA synthetase family. Type 1 subfamily. Homodimer.

It localises to the cytoplasm. The catalysed reaction is tRNA(Asx) + L-aspartate + ATP = L-aspartyl-tRNA(Asx) + AMP + diphosphate. Functionally, aspartyl-tRNA synthetase with relaxed tRNA specificity since it is able to aspartylate not only its cognate tRNA(Asp) but also tRNA(Asn). Reaction proceeds in two steps: L-aspartate is first activated by ATP to form Asp-AMP and then transferred to the acceptor end of tRNA(Asp/Asn). This is Aspartate--tRNA(Asp/Asn) ligase from Caulobacter sp. (strain K31).